Reading from the N-terminus, the 154-residue chain is Methylglyoxal synthase (154 aa).

The MGS-like domain occupies glutamine 6–isoleucine 154. Substrate contacts are provided by residues histidine 19, lysine 23, threonine 45–threonine 48, and serine 65–glycine 66. The active-site Proton donor/acceptor is the aspartate 71. Histidine 98 provides a ligand contact to substrate.

It belongs to the methylglyoxal synthase family.

The enzyme catalyses dihydroxyacetone phosphate = methylglyoxal + phosphate. Its function is as follows. Catalyzes the formation of methylglyoxal from dihydroxyacetone phosphate. In Pseudoalteromonas translucida (strain TAC 125), this protein is Methylglyoxal synthase.